A 244-amino-acid chain; its full sequence is Small ribosomal subunit protein uS3 (244 aa).

The region spanning 39–107 (VREMLRKKLA…PAHINVTEVR (69 aa)) is the KH type-2 domain. The segment at 213–244 (VGQEKQDDSPRNDRNDRGDRGDRPSRPAREAR) is disordered. Residues 216-244 (EKQDDSPRNDRNDRGDRGDRPSRPAREAR) are compositionally biased toward basic and acidic residues.

The protein belongs to the universal ribosomal protein uS3 family. In terms of assembly, part of the 30S ribosomal subunit. Forms a tight complex with proteins S10 and S14.

Binds the lower part of the 30S subunit head. Binds mRNA in the 70S ribosome, positioning it for translation. This Xanthomonas campestris pv. campestris (strain 8004) protein is Small ribosomal subunit protein uS3.